Reading from the N-terminus, the 125-residue chain is Multifunctional methyltransferase subunit TRM112-like protein (125 aa).

The region spanning 2–119 (KLLTHNLLSS…SRGIPNMLLN (118 aa)) is the TRM112 domain.

It belongs to the TRM112 family. In terms of assembly, part of the heterodimeric BUD23-TRM112 methyltransferase complex; this heterodimerization is necessary for the metabolic stability and activity of the catalytic subunit BUD23. Part of the heterodimeric N6AMT1-TRM112 methyltransferase complex; this heterodimerization is necessary for S-adenosyl-L-methionine-binding to N6AMT1/HEMK2. Part of the heterodimeric ALKBH8-TRM112 methyltransferase complex. Part of the heterodimeric METTL5-TRM112 methyltransferase complex; this heterodimerization is necessary for the stability of the catalytic subunit METTL5. Part of the heterodimeric THUMPD3-TRM112 methyltransferase complex; this complex forms an active tRNA methyltransferase, where TRMT112 acts as an activator of the catalytic subunit THUMPD3. Part of the heterodimeric THUMPD2-TRM112 methyltransferase complex; this complex forms an active tRNA methyltransferase, where TRMT112 acts as an activator of the catalytic subunit THUMPD2. Part of the heterodimeric TRMT11-TRM112 methyltransferase complex; this complex forms an active tRNA methyltransferase, where TRMT112 acts as an activator of the catalytic subunit TRMT11. In terms of tissue distribution, abundantly expressed in the testis, also expressed in the brain, heart, kidney, liver, lung, muscle and spleen.

The protein resides in the nucleus. It is found in the nucleoplasm. The protein localises to the cytoplasm. Its subcellular location is the perinuclear region. Its function is as follows. Acts as an activator of both rRNA/tRNA and protein methyltransferases. Together with methyltransferase BUD23, methylates the N(7) position of a guanine in 18S rRNA. The heterodimer with HEMK2/N6AMT1 catalyzes N5-methylation of ETF1 on 'Gln-185', using S-adenosyl L-methionine as methyl donor. The heterodimer with ALKBH8 catalyzes the methylation of 5-carboxymethyl uridine to 5-methylcarboxymethyl uridine at the wobble position of the anticodon loop in target tRNA species. Together with methyltransferase THUMPD3, catalyzes the formation of N(2)-methylguanosine at position 6 in a broad range of tRNA substrates and at position 7 of tRNA(Trp). Involved in the pre-rRNA processing steps leading to small-subunit rRNA production. Together with methyltransferase METTL5, specifically methylates the 6th position of adenine in position 1832 of 18S rRNA. This Mus musculus (Mouse) protein is Multifunctional methyltransferase subunit TRM112-like protein (Trmt112).